Consider the following 493-residue polypeptide: Cytochrome P450 monooxygenase olcG (493 aa).

A helical membrane pass occupies residues 15 to 35 (GILATGALVIFVALFLATFQF). Position 429 (C429) interacts with heme.

It belongs to the cytochrome P450 family. Requires heme as cofactor.

It localises to the membrane. The protein operates within secondary metabolite biosynthesis; terpenoid biosynthesis. Its function is as follows. Cytochrome P450 monooxygenase; part of the gene cluster that mediates the biosynthesis of 15-deoxyoxalicine B. The first step of the pathway is the synthesis of nicotinyl-CoA from nicotinic acid by the nicotinic acid-CoA ligase olcI. Nicotinyl-CoA is then a substrate of polyketide synthase olcA to produce 4-hydroxy-6-(3-pyridinyl)-2H-pyran-2-one (HPPO) which is further prenylated by the polyprenyl transferase olcH to yield geranylgeranyl-HPPO. Geranylgeranyl pyrophosphate is provided by the cluster-specific geranylgeranyl pyrophosphate synthase olcC. The FAD-dependent monooxygenase olcE catalyzes the epoxidation of geranylgeranyl-HPPO and the terpene cyclase olcD catalyzes the cyclization of the terpenoid component, resulting in the formation of the tricyclic terpene moiety seen in predecaturin E. The cytochrome P450 monooxygenase then catalyzes the allylic oxidation of predecaturin E, which is followed by spirocylization with concomitant loss of one molecule of water to form decaturin E. Decaturin E is the substrate of the cytochrome P450 monooxygenase olcJ which hydroxylates it at the C-29 position to form decaturin F. The short-chain dehydrogenase/reductase olcF may catalyze the oxidation of decaturin F to generate the 29-hydroxyl-27-one intermediate, and subsequent hemiacetal formation probably leads to the formation of decaturin C. The dioxygenase olcK may be a peroxisomal enzyme that catalyzes the hydroxylation of decaturin C into decaturin A once decaturin C is shuttled into the peroxisome by the MFS transporter olcL. Finally the cytochrome P450 monooxygenase olcB catalyzes the oxidative rearrangement to yield 15-deoxyoxalicine B. In the absence of olcJ, decaturin E may be shunted to a pathway in which it is oxidized to a ketone, possibly by olcF, to form decaturin D, which undergoes further allylic oxidation to yield decaturin G. Moreover, in the absence of oclK or oclL, oclB can convert decaturin C into 15-deoxyoxalicine A. The polypeptide is Cytochrome P450 monooxygenase olcG (Penicillium canescens).